The chain runs to 375 residues: D-alanine--D-alanine ligase (375 aa).

An ATP-grasp domain is found at 145–348; sequence KRLLRDADLE…YPALITRLIE (204 aa). 175–230 lines the ATP pocket; that stretch reads ITYLGSSLFVKPANQGSSVGVSKVINRISFDQALALAFCFDDKVLVESAINGRELE. Residues aspartate 302, glutamate 315, and asparagine 317 each contribute to the Mg(2+) site.

It belongs to the D-alanine--D-alanine ligase family. Requires Mg(2+) as cofactor. The cofactor is Mn(2+).

The protein resides in the cytoplasm. The catalysed reaction is 2 D-alanine + ATP = D-alanyl-D-alanine + ADP + phosphate + H(+). Its pathway is cell wall biogenesis; peptidoglycan biosynthesis. Functionally, cell wall formation. The polypeptide is D-alanine--D-alanine ligase (Baumannia cicadellinicola subsp. Homalodisca coagulata).